The primary structure comprises 284 residues: Rhomboid-type serine protease 2 (284 aa).

6 helical membrane-spanning segments follow: residues 17–37, 66–86, 98–118, 124–141, 160–180, and 182–202; these read PPAL…IKSV, FHVN…PLAV, VTLN…GLIF, VIGL…MAYH, IKLY…ILFP, and SSLP…YGYI. Residue S128 is the Nucleophile of the active site. The active site involves H187.

Belongs to the peptidase S54 family.

The protein resides in the golgi apparatus membrane. Its subcellular location is the golgi apparatus. It is found in the cis-Golgi network membrane. It catalyses the reaction Cleaves type-1 transmembrane domains using a catalytic dyad composed of serine and histidine that are contributed by different transmembrane domains.. In terms of biological role, probable rhomboid-type serine protease that catalyzes intramembrane proteolysis. This Candida albicans (strain SC5314 / ATCC MYA-2876) (Yeast) protein is Rhomboid-type serine protease 2 (RBD2).